The sequence spans 176 residues: MSAKQDDTQPIQAASKRLLKVILEGEALTRLSPLQEMDRAQAVADLEAENVFSLERPLPGMTPVSEQGPYVLHLSIQEGRLIFDIRRQDDTFLTVLALALGPFRRLIKDYHLLVDSYVKAVQEAREARIQAIDMGRRGLHNEGAELMRHRLNGKISIDFETARRLFTLVCVLHQRI.

This sequence belongs to the UPF0262 family.

The sequence is that of UPF0262 protein GbCGDNIH1_1393 from Granulibacter bethesdensis (strain ATCC BAA-1260 / CGDNIH1).